Reading from the N-terminus, the 96-residue chain is UPF0235 protein Sputcn32_2690 (96 aa).

Belongs to the UPF0235 family.

In Shewanella putrefaciens (strain CN-32 / ATCC BAA-453), this protein is UPF0235 protein Sputcn32_2690.